Consider the following 225-residue polypeptide: PKHD-type hydroxylase HEAR3399 (225 aa).

A Fe2OG dioxygenase domain is found at 77 to 177 (RYMPPLFNRY…RVCSFFWLQS (101 aa)). His95, Asp97, and His158 together coordinate Fe cation. 2-oxoglutarate is bound at residue Arg168.

Fe(2+) is required as a cofactor. L-ascorbate serves as cofactor.

In Herminiimonas arsenicoxydans, this protein is PKHD-type hydroxylase HEAR3399.